A 96-amino-acid polypeptide reads, in one-letter code: Small ribosomal subunit protein bS16 (96 aa).

Belongs to the bacterial ribosomal protein bS16 family.

The protein is Small ribosomal subunit protein bS16 of Vesicomyosocius okutanii subsp. Calyptogena okutanii (strain HA).